Consider the following 270-residue polypeptide: MLTVENIEVTLGATPVLHGIDMVAQPGQVTAIVGHNGSGKTTLLRAMTQETPYTGTIRLDGADLASFKPWELATRRAVLPQASRIAFPFTVLEVVRLGLLAGRDGARKALPQEALARVGLSGFEGRYYQELSGGEQQRVQLARVLAQVWEPVQDGQPRWLFLDEPVSSLDIGHQLEVMEIAREYARGGGGVIAVMHDLNLTAMFADHVVLLADGRCLSAGRPAQVMTDVTLSQAYGCTLQVNTSPPGDATYLLPHLARRTGGAHHARRTG.

The ABC transporter domain occupies 2–238 (LTVENIEVTL…VTLSQAYGCT (237 aa)). 34–41 (GHNGSGKT) is an ATP binding site.

It belongs to the ABC transporter superfamily. Heme (hemin) importer (TC 3.A.1.14.5) family. As to quaternary structure, the complex is composed of two ATP-binding proteins (HmuV), two transmembrane proteins (HmuU) and a solute-binding protein (HmuT).

Its subcellular location is the cell inner membrane. Part of the ABC transporter complex HmuTUV involved in hemin import. Responsible for energy coupling to the transport system. This Jannaschia sp. (strain CCS1) protein is Hemin import ATP-binding protein HmuV.